A 98-amino-acid chain; its full sequence is NADH-ubiquinone oxidoreductase chain 4L (98 aa).

3 consecutive transmembrane segments (helical) span residues 2-22 (PSTFFNLTMAFSLSLLGTLMF), 26-46 (LMSTLLCLEGMVLSLFIMTSV), and 58-79 (PIPITILVFAACEAAVGLALLV).

It belongs to the complex I subunit 4L family. Core subunit of respiratory chain NADH dehydrogenase (Complex I) which is composed of 45 different subunits.

Its subcellular location is the mitochondrion inner membrane. It carries out the reaction a ubiquinone + NADH + 5 H(+)(in) = a ubiquinol + NAD(+) + 4 H(+)(out). Its function is as follows. Core subunit of the mitochondrial membrane respiratory chain NADH dehydrogenase (Complex I) which catalyzes electron transfer from NADH through the respiratory chain, using ubiquinone as an electron acceptor. Part of the enzyme membrane arm which is embedded in the lipid bilayer and involved in proton translocation. In Mus musculus (Mouse), this protein is NADH-ubiquinone oxidoreductase chain 4L.